Reading from the N-terminus, the 327-residue chain is GMP reductase (327 aa).

The active-site Thioimidate intermediate is the Cys-176. 205-228 provides a ligand contact to NADP(+); the sequence is IIADGGIRTHGDIAKSIRFGASMV.

It belongs to the IMPDH/GMPR family. GuaC type 2 subfamily.

It carries out the reaction IMP + NH4(+) + NADP(+) = GMP + NADPH + 2 H(+). Catalyzes the irreversible NADPH-dependent deamination of GMP to IMP. It functions in the conversion of nucleobase, nucleoside and nucleotide derivatives of G to A nucleotides, and in maintaining the intracellular balance of A and G nucleotides. This chain is GMP reductase, found in Streptococcus gordonii (strain Challis / ATCC 35105 / BCRC 15272 / CH1 / DL1 / V288).